Consider the following 135-residue polypeptide: AYTLATHTAGVIPAGKLERVDPTTVRQEGPWADPAQAVVQTGPNQYTVYVLAFAFGYQPNPIEVPQGAEIVFKITSPDVIHGFHVEGTNINVEVLPGEVSTVRYTFKRPGEYRIICNQYCGLGHQNMFGTIVVKE.

4 residues coordinate Cu cation: H81, C116, C120, and H124.

This sequence belongs to the cytochrome c oxidase subunit 2 family.

Its subcellular location is the cell membrane. It catalyses the reaction 4 Fe(II)-[cytochrome c] + O2 + 8 H(+)(in) = 4 Fe(III)-[cytochrome c] + 2 H2O + 4 H(+)(out). Functionally, subunits I and II form the functional core of the enzyme complex. Electrons originating in cytochrome c are transferred via heme a and Cu(A) to the binuclear center formed by heme a3 and Cu(B). The protein is Cytochrome c oxidase subunit 2 (cbaB) of Thermus thermophilus.